Reading from the N-terminus, the 423-residue chain is D-threonate kinase (423 aa).

Residues Asp-9, Arg-51, and Lys-81–Ser-84 each bind substrate. Residues Ser-245, Gly-355–Ile-358, and Gly-401 each bind ATP.

Belongs to the four-carbon acid sugar kinase family.

The enzyme catalyses D-threonate + ATP = 4-O-phospho-D-threonate + ADP + H(+). Its function is as follows. Catalyzes the ATP-dependent phosphorylation of D-threonate to D-threonate 4-phosphate. Can also phosphorylate 4-hydroxy-L-threonine, with lower efficiency. This side reaction may serve to deal with the toxicity of 4-hydroxy-L-threonine by converting it into 4-hydroxy-L-threonine 4-phosphate, a useful product that can be used by PdxA2. This is D-threonate kinase from Salmonella typhimurium (strain LT2 / SGSC1412 / ATCC 700720).